Here is a 574-residue protein sequence, read N- to C-terminus: MKASQFFISTLKEAPADAEIVSHKLMMRAGMIKKLGAGLYTYMPVGLRVIRKVEQIVREEMNASGAVEVLMPVVQPAELWQETGRWDKMGDEMMRVKDRHERDLVIQPTSEEVVTDIARTEIRSYKQMPVNFYQIQTKFRDERRPRFGIMRGREFTMKDAYSFDRDAEGLKVSYEKMYGAYTRIFQRFGLEFRAVAADNGAIGGSGSHEFHVIADTGEDAIVYSPDSDYAANIEAAEALAPAMPRGAATEALTKTHTPKRAKCEAVAEQLGIALQRTVKSIVLAKDVEGGEPQIWLLLLRGDHELNEIKASKVPGLADFRFATEGEILRAFGTPPGYLGPIGTKQPVKVVADRTVAAMSDFVVGANEEDFHYTGVNWGRDLPEAEVYDLRNVVEGDPSPDGKGTLAICRGIEVGHVFMLGTRYSESMSATFLDENGKTQPMMMGCYGIGITRILGAAIEQNYDARGIIWPVSIAPFEVVICPVGYDRSEAVRAEADRLHAELAAAGIDVILDDRGERPGAMFADWELIGVPFRVVVGERGLKDGKLELQGRRDEAAAAVAPADVLATLKSRLAQ.

Belongs to the class-II aminoacyl-tRNA synthetase family. ProS type 1 subfamily. As to quaternary structure, homodimer.

The protein localises to the cytoplasm. It carries out the reaction tRNA(Pro) + L-proline + ATP = L-prolyl-tRNA(Pro) + AMP + diphosphate. Its function is as follows. Catalyzes the attachment of proline to tRNA(Pro) in a two-step reaction: proline is first activated by ATP to form Pro-AMP and then transferred to the acceptor end of tRNA(Pro). As ProRS can inadvertently accommodate and process non-cognate amino acids such as alanine and cysteine, to avoid such errors it has two additional distinct editing activities against alanine. One activity is designated as 'pretransfer' editing and involves the tRNA(Pro)-independent hydrolysis of activated Ala-AMP. The other activity is designated 'posttransfer' editing and involves deacylation of mischarged Ala-tRNA(Pro). The misacylated Cys-tRNA(Pro) is not edited by ProRS. This is Proline--tRNA ligase from Ralstonia nicotianae (strain ATCC BAA-1114 / GMI1000) (Ralstonia solanacearum).